The chain runs to 455 residues: MEKPIVAIVGRPNVGKSTLFNKLIGERRAIIADEAGTTRDRQYGETIWNGRVFTIVDTAGLLVGDDDPNLPLAEIVRRTHQQAQLAIDEADVIVFMVDVREGLIAADEEVAALLRRSSKPVVLGVNKADTEDRRQNAVEFYNLGLGDPIALSAYHGTGSGDLLDEIVRHLPAGQEEEEDDNSLKIAIVGRPNVGKSSLLNKLVGEERVVVSNIPGTTRDSIDTKLTYKGIPITLIDTAGIRRRGSIEQGIERYSVLRTMKAIERCHIALILVDAQEGPTAQDTHVAGMVLEANKGLAIIVNKWDLIDKAKFSYEDAKTTMSQVFHFAPYAPIEFISAKTGQRATKVLDIAQTIQSERNKRVSTSDINNLLRAAVREHPPTAMHKGAHLRLFYATQAQVEPPVFLFFSNAPEQVHFGYKRYLENRIREQYGFIGTPIILVFKGREEEQTVSVSGKR.

EngA-type G domains lie at 4–174 (PIVA…PAGQ) and 183–358 (LKIA…SERN). GTP contacts are provided by residues 10 to 17 (GRPNVGKS), 57 to 61 (DTAGL), 126 to 129 (NKAD), 189 to 196 (GRPNVGKS), 236 to 240 (DTAGI), and 301 to 304 (NKWD). The KH-like domain occupies 359-444 (KRVSTSDINN…PIILVFKGRE (86 aa)).

Belongs to the TRAFAC class TrmE-Era-EngA-EngB-Septin-like GTPase superfamily. EngA (Der) GTPase family. Associates with the 50S ribosomal subunit.

In terms of biological role, GTPase that plays an essential role in the late steps of ribosome biogenesis. The chain is GTPase Der from Herpetosiphon aurantiacus (strain ATCC 23779 / DSM 785 / 114-95).